A 177-amino-acid chain; its full sequence is Large ribosomal subunit protein uL6 (177 aa).

Belongs to the universal ribosomal protein uL6 family. As to quaternary structure, part of the 50S ribosomal subunit.

This protein binds to the 23S rRNA, and is important in its secondary structure. It is located near the subunit interface in the base of the L7/L12 stalk, and near the tRNA binding site of the peptidyltransferase center. The sequence is that of Large ribosomal subunit protein uL6 from Rhodopseudomonas palustris (strain BisB5).